The sequence spans 626 residues: MSDKSELKAELERKKQRLAQIREEKKRKEEERKKKEAELKKDAVPLQDDSDLEKKRREADALLQSMGITSDVSAAPAPMSPTAKSVGSPSEAGSQDSGDGTTGPRTLHWDCDPSTVLLHSELGRGPLKLAMTKMTHVDFPPKEVVSYTKETQTPTMTEQKDEEDEEEETPAAQPEAETEKEKPEEKQVEEALPHELTEEEKLQILHSEEFMDFFDHSTRIVERALSEHVDVFFDYSGRDMEEKEGEMQAGTKLSLNRKFVDDRWSKQRVVTCLDWSPQYPELLVASYNNNEEAPHEPDGVALVWNMKYKKATPEYVFHCQSAVMSAAFAKFHPNLVVGGTYSGQIVLWDNRSNRRTPVQRTPLSAAAHTHPVYCVNVVGTQNAHNLISISTDGKMCSWSLDMLSQPQDSMELVFKQSKSVAVTSMSFPLGDVNNFVVGSEDGSVYTASRHGSRAGISEMFEGHHGPITGIHCHTAAGPVDFSHLFLTASFDWTVKLWSNKNNKPLYSFEDNSDYVYDVMWSPVHPALFACVDGLGRVDLWNLNNDTEVPTASVAVDGSPALNRLRWSQSGREIAVGDSEGQIHIYDVGEQIAVPRNDEWTRFVRTLVEINENRDDAEELAAQRLAA.

A compositionally biased stretch (basic and acidic residues) spans 20 to 43 (QIREEKKRKEEERKKKEAELKKDA). Disordered stretches follow at residues 20-108 (QIRE…RTLH) and 142-197 (KEVV…HELT). Polar residues predominate over residues 82–99 (TAKSVGSPSEAGSQDSGD). The span at 160–169 (KDEEDEEEET) shows a compositional bias: acidic residues. Positions 177–197 (ETEKEKPEEKQVEEALPHELT) are enriched in basic and acidic residues. WD repeat units follow at residues 265 to 314 (SKQR…ATPE), 318 to 358 (HCQS…RTPV), 367 to 408 (AHTH…QPQD), 417 to 457 (SKSV…AGIS), 462 to 507 (GHHG…PLYS), 510 to 550 (DNSD…EVPT), and 556 to 595 (DGSP…AVPR).

The protein belongs to the dynein intermediate chain family. In terms of assembly, homodimer. The cytoplasmic dynein 1 complex consists of two catalytic heavy chains (HCs) and a number of non-catalytic subunits presented by intermediate chains (ICs), light intermediate chains (LICs) and light chains (LCs); the composition seems to vary in respect to the IC, LIC and LC composition. The heavy chain homodimer serves as a scaffold for the probable homodimeric assembly of the respective non-catalytic subunits. The ICs and LICs bind directly to the HC dimer and the LCs assemble on the IC dimer.

The protein localises to the cytoplasm. Its subcellular location is the cytoskeleton. Its function is as follows. Acts as one of several non-catalytic accessory components of the cytoplasmic dynein 1 complex that are thought to be involved in linking dynein to cargos and to adapter proteins that regulate dynein function. Cytoplasmic dynein 1 acts as a motor for the intracellular retrograde motility of vesicles and organelles along microtubules. Plays a role in the development of anterior brain and cartilaginous structures. The protein is Dynein, cytoplasmic 1, intermediate chain 2a (dync1i2a) of Danio rerio (Zebrafish).